A 317-amino-acid polypeptide reads, in one-letter code: Probable deoxyhypusine synthase 1 (317 aa).

Lys-285 (nucleophile) is an active-site residue.

Belongs to the deoxyhypusine synthase family. NAD(+) serves as cofactor.

It catalyses the reaction [eIF5A protein]-L-lysine + spermidine = [eIF5A protein]-deoxyhypusine + propane-1,3-diamine. Its pathway is protein modification; eIF5A hypusination. In terms of biological role, catalyzes the NAD-dependent oxidative cleavage of spermidine and the subsequent transfer of the butylamine moiety of spermidine to the epsilon-amino group of a specific lysine residue of the eIF-5A precursor protein to form the intermediate deoxyhypusine residue. The protein is Probable deoxyhypusine synthase 1 (dys1) of Methanosarcina mazei (strain ATCC BAA-159 / DSM 3647 / Goe1 / Go1 / JCM 11833 / OCM 88) (Methanosarcina frisia).